Reading from the N-terminus, the 127-residue chain is Cold-regulated protein 1 (127 aa).

Positions 39–127 (ARGPPPSPAP…WTRPRMARAR (89 aa)) are disordered. The segment covering 85–101 (SRRRRRRRATRRARSRM) has biased composition (basic residues). Positions 102–121 (PRTTPWRAPRAPARAWWTRP) are enriched in low complexity.

The polypeptide is Cold-regulated protein 1 (Hordeum vulgare (Barley)).